A 302-amino-acid chain; its full sequence is AP-1 complex-associated regulatory protein (302 aa).

Ser-29 carries the phosphoserine modification. An interaction with AP1G1 region spans residues 78–138 (DSIAEKQKDL…ERQRIVQQYH (61 aa)). Positions 80–138 (IAEKQKDLDKKIQKELALQEEKLRLEEEALYAAQREAARAAKQRKLLEQERQRIVQQYH) form a coiled coil. The span at 188–206 (CDLMTKTKSTSGNDDSTSL) shows a compositional bias: polar residues. The tract at residues 188–258 (CDLMTKTKST…TSASDDSNGL (71 aa)) is disordered. Positions 199–215 (GNDDSTSLDLEWEDEEG) are sufficient for association with the Arp2/3 complex. Residues 221–233 (PMRERSKTEEDIL) are compositionally biased toward basic and acidic residues. Residue Ser-226 is modified to Phosphoserine. Residue Thr-228 is modified to Phosphothreonine. Residues 242 to 255 (KKTGSNPTSASDDS) are compositionally biased toward polar residues.

Interacts (via coiled-coil domain) with AP1G1 (via GAE domain). Interacts with KIF5B. Associates with the Arp2/3 complex. In terms of processing, palmitoylated.

Its subcellular location is the golgi apparatus. It localises to the trans-Golgi network. It is found in the late endosome. The protein resides in the early endosome. In terms of biological role, necessary for adaptor protein complex 1 (AP-1)-dependent transport between the trans-Golgi network and endosomes. Regulates the membrane association of AP1G1/gamma1-adaptin, one of the subunits of the AP-1 adaptor complex. The direct interaction with AP1G1/gamma1-adaptin attenuates the release of the AP-1 complex from membranes. Regulates endosomal membrane traffic via association with AP-1 and KIF5B thus linking kinesin-based plus-end-directed microtubular transport to AP-1-dependent membrane traffic. May act as effector of AP-1 in calcium-induced endo-lysosome secretion. Inhibits Arp2/3 complex function; negatively regulates cell spreading, size and motility via intracellular sequestration of the Arp2/3 complex. The chain is AP-1 complex-associated regulatory protein (AP1AR) from Homo sapiens (Human).